We begin with the raw amino-acid sequence, 305 residues long: MKKIKCALIGPGNIGTDLLAKLQRSAVLEPVWMVGIDPESDGLKRAREMGIKTTSDGVDGLIPHMKADGVQIVFDATSAYVHAENSRKVNEQGALMIDLTPAAIGPFCVPPVNLKAHVGSGEMNVNMVTCGGQATIPMVAAVSRVQPVAYGEIVATVSSRSVGPGTRKNIDEFTRTTAGAVEKVGGARKGKAIIVINPAEPPLMMRDTVHCLTETEPDQAAITASVHAMLAEVQKYVPGYRLVNGPVFDGNRVSVFLEVEGLGDYLPKYAGNLDIMTAAAARTAEMFAEEILKGELVLQPTAVAA.

Cys-130 functions as the Acyl-thioester intermediate in the catalytic mechanism. NAD(+)-binding positions include 161–169 (SVGPGTRKN) and Asn-272.

This sequence belongs to the acetaldehyde dehydrogenase family.

It carries out the reaction acetaldehyde + NAD(+) + CoA = acetyl-CoA + NADH + H(+). The protein is Acetaldehyde dehydrogenase of Leptothrix cholodnii (strain ATCC 51168 / LMG 8142 / SP-6) (Leptothrix discophora (strain SP-6)).